Reading from the N-terminus, the 571-residue chain is E3 ubiquitin-protein ligase ipaH3 (571 aa).

The segment at 1–260 (MSIMLPINNN…SQQTAQPDYH (260 aa)) is interaction with target proteins. LRR repeat units follow at residues 58-81 (INQFSELQLNRLNLSSLPDNLPPQ), 83-99 (TVLEITQNALISLPELP), 100-119 (ASLEYLDACDNRLSTLPELP), 120-144 (ASLKHLDVDNNQLTMLPELPALLEY), 146-159 (NADNNQLTMLPELP), 160-184 (TSLEVLSVRNNQLTFLPELPESLEA), 186-202 (DVSTNLLESLPAVPVRN), 205-229 (SEETEIFFRCRENRITHIPENILSL), and 232-260 (TCTIILEDNPLSSRIRESLSQQTAQPDYH). Positions 269–278 (SDGQQNTLHR) are linker. In terms of domain architecture, NEL spans 279–571 (PLADAVTAWF…SENGSQLHHS (293 aa)). The segment at 279–571 (PLADAVTAWF…SENGSQLHHS (293 aa)) is E3 ubiquitin-protein ligase catalytic domain. Residue C363 is the Glycyl thioester intermediate of the active site.

This sequence belongs to the LRR-containing bacterial E3 ligase family. In terms of processing, ubiquitinated in the presence of host E1 ubiquitin-activating enzyme, E2 ubiquitin-conjugating enzyme UBE2D3 and ubiquitin.

Its subcellular location is the secreted. It localises to the host cytoplasm. The catalysed reaction is S-ubiquitinyl-[E2 ubiquitin-conjugating enzyme]-L-cysteine + [acceptor protein]-L-lysine = [E2 ubiquitin-conjugating enzyme]-L-cysteine + N(6)-ubiquitinyl-[acceptor protein]-L-lysine.. Effector proteins function to alter host cell physiology and promote bacterial survival in host tissues. This protein is an E3 ubiquitin ligase that interferes with host's ubiquitination pathway. Synthesizes a 'Lys-48'-linked ubiquitin chain, which requires non-covalent binding between ubiquitin and the host ubiquitin-conjugating enzyme UBE2D1. This is E3 ubiquitin-protein ligase ipaH3 (ipaH3) from Shigella flexneri.